Here is a 270-residue protein sequence, read N- to C-terminus: NAD kinase (270 aa).

The active-site Proton acceptor is Asp-63. NAD(+)-binding positions include Asp-63–Gly-64, Arg-68, Asn-131–Glu-132, Lys-142, Arg-159, Asp-161, Thr-172–Ser-177, Ala-196, and Gln-230.

Belongs to the NAD kinase family. It depends on a divalent metal cation as a cofactor.

The protein localises to the cytoplasm. It catalyses the reaction NAD(+) + ATP = ADP + NADP(+) + H(+). Functionally, involved in the regulation of the intracellular balance of NAD and NADP, and is a key enzyme in the biosynthesis of NADP. Catalyzes specifically the phosphorylation on 2'-hydroxyl of the adenosine moiety of NAD to yield NADP. This Methanoregula boonei (strain DSM 21154 / JCM 14090 / 6A8) protein is NAD kinase.